The chain runs to 379 residues: UDP-N-acetylglucosamine--N-acetylmuramyl-(pentapeptide) pyrophosphoryl-undecaprenol N-acetylglucosamine transferase (379 aa).

Residues 13–15 (TGG), Asn-123, Arg-166, Ser-194, and Gln-295 contribute to the UDP-N-acetyl-alpha-D-glucosamine site.

It belongs to the glycosyltransferase 28 family. MurG subfamily.

The protein resides in the cell inner membrane. The catalysed reaction is di-trans,octa-cis-undecaprenyl diphospho-N-acetyl-alpha-D-muramoyl-L-alanyl-D-glutamyl-meso-2,6-diaminopimeloyl-D-alanyl-D-alanine + UDP-N-acetyl-alpha-D-glucosamine = di-trans,octa-cis-undecaprenyl diphospho-[N-acetyl-alpha-D-glucosaminyl-(1-&gt;4)]-N-acetyl-alpha-D-muramoyl-L-alanyl-D-glutamyl-meso-2,6-diaminopimeloyl-D-alanyl-D-alanine + UDP + H(+). The protein operates within cell wall biogenesis; peptidoglycan biosynthesis. Its function is as follows. Cell wall formation. Catalyzes the transfer of a GlcNAc subunit on undecaprenyl-pyrophosphoryl-MurNAc-pentapeptide (lipid intermediate I) to form undecaprenyl-pyrophosphoryl-MurNAc-(pentapeptide)GlcNAc (lipid intermediate II). The chain is UDP-N-acetylglucosamine--N-acetylmuramyl-(pentapeptide) pyrophosphoryl-undecaprenol N-acetylglucosamine transferase from Rhodospirillum centenum (strain ATCC 51521 / SW).